Here is a 165-residue protein sequence, read N- to C-terminus: Transcription elongation factor A protein-like 1 (165 aa).

Disordered stretches follow at residues 1-66 (MENS…LLPE) and 89-124 (IPMEQPPCGIGKHKLEEGSFKERLARSRPQFRGDIH). Acidic residues predominate over residues 33 to 60 (CSEDDQSSEDLSSEEQSSDEEFFPEELL). Over residues 101–124 (HKLEEGSFKERLARSRPQFRGDIH) the composition is skewed to basic and acidic residues.

It belongs to the TFS-II family. TFA subfamily.

It localises to the nucleus. May be involved in transcriptional regulation. Modulates various viral and cellular promoters in a promoter context-dependent manner. Does not bind DNA directly. The polypeptide is Transcription elongation factor A protein-like 1 (Rattus norvegicus (Rat)).